The following is a 747-amino-acid chain: Protein Niban 2 (747 aa).

Gly-2 is lipidated: N-myristoyl glycine. In terms of domain architecture, PH spans 68-192; sequence RIIFSGNLFQ…WQAVLQDCVR (125 aa). 2 positions are modified to phosphoserine: Ser-568 and Ser-574. The disordered stretch occupies residues 589-747; it reads WGEQYGDGGD…EDSAGVQTEF (159 aa). The span at 593–602 shows a compositional bias: gly residues; it reads YGDGGDGSDS. Phosphoserine occurs at positions 605, 626, 641, 645, 648, 667, 672, 683, 693, and 697. The span at 708–722 shows a compositional bias: basic and acidic residues; the sequence is VDLEPPKPSDQETGE. Residues 734-747 are compositionally biased toward polar residues; that stretch reads HTTTEDSAGVQTEF.

This sequence belongs to the Niban family. Post-translationally, as apoptosis proceeds, degraded via an proteasome-independent pathway, probably by caspases.

It is found in the cytoplasm. The protein localises to the cytosol. It localises to the cell junction. The protein resides in the adherens junction. Its subcellular location is the membrane. Its function is as follows. May play a role in apoptosis suppression. The polypeptide is Protein Niban 2 (Rattus norvegicus (Rat)).